The following is a 38-amino-acid chain: Histidine decarboxylase small chain (38 aa).

Heterohexamer of 3 large and 3 small chains. Pyruvate serves as cofactor.

The enzyme catalyses L-histidine + H(+) = histamine + CO2. This Micrococcus sp protein is Histidine decarboxylase small chain.